We begin with the raw amino-acid sequence, 356 residues long: Methionine import ATP-binding protein MetN 1 (356 aa).

One can recognise an ABC transporter domain in the interval 2 to 241 (IELKNISVTF…PQQPLTKDFI (240 aa)). ATP is bound at residue 38 to 45 (GYSGAGKS).

Belongs to the ABC transporter superfamily. Methionine importer (TC 3.A.1.24) family. As to quaternary structure, the complex is composed of two ATP-binding proteins (MetN), two transmembrane proteins (MetI) and a solute-binding protein (MetQ).

It localises to the cell membrane. The enzyme catalyses L-methionine(out) + ATP + H2O = L-methionine(in) + ADP + phosphate + H(+). The catalysed reaction is D-methionine(out) + ATP + H2O = D-methionine(in) + ADP + phosphate + H(+). In terms of biological role, part of the ABC transporter complex MetNIQ involved in methionine import. Responsible for energy coupling to the transport system. This chain is Methionine import ATP-binding protein MetN 1, found in Enterococcus faecalis (strain ATCC 700802 / V583).